The chain runs to 101 residues: Cilia- and flagella-associated protein 141 (101 aa).

In terms of assembly, microtubule inner protein component of sperm flagellar doublet microtubules. In terms of tissue distribution, expressed in trachea multiciliated cells.

The protein localises to the cytoplasm. The protein resides in the cytoskeleton. It is found in the cilium axoneme. It localises to the flagellum axoneme. Its function is as follows. Microtubule inner protein (MIP) part of the dynein-decorated doublet microtubules (DMTs) in cilia axoneme, which is required for motile cilia beating. The sequence is that of Cilia- and flagella-associated protein 141 from Bos taurus (Bovine).